A 206-amino-acid chain; its full sequence is Large ribosomal subunit protein uL4 (206 aa).

The interval 47 to 77 is disordered; it reads GTHDTKTRGEVSGGGRKPWRQKGTGRARHGS. The segment covering 63–77 has biased composition (basic residues); that stretch reads KPWRQKGTGRARHGS.

Belongs to the universal ribosomal protein uL4 family. In terms of assembly, part of the 50S ribosomal subunit.

In terms of biological role, one of the primary rRNA binding proteins, this protein initially binds near the 5'-end of the 23S rRNA. It is important during the early stages of 50S assembly. It makes multiple contacts with different domains of the 23S rRNA in the assembled 50S subunit and ribosome. Its function is as follows. Forms part of the polypeptide exit tunnel. The polypeptide is Large ribosomal subunit protein uL4 (Carboxydothermus hydrogenoformans (strain ATCC BAA-161 / DSM 6008 / Z-2901)).